Here is a 180-residue protein sequence, read N- to C-terminus: Signal peptidase complex subunit 3 (180 aa).

Residues 1-12 (MHNLLSRANALL) lie on the Cytoplasmic side of the membrane. Residues 13–33 (AFTLWVMAAVTAACFLSTVFL) traverse the membrane as a helical; Signal-anchor for type II membrane protein segment. Residues 34-180 (DYTVPTKLTV…PTTYTTTRRS (147 aa)) are Lumenal-facing. A glycan (N-linked (GlcNAc...) asparagine) is linked at Asn-141.

Belongs to the SPCS3 family. In terms of assembly, component of the signal peptidase complex (SPC) composed of a catalytic subunit sec-11 and three accessory subunits spcs-1, spcs-2 and spcs-3. The complex induces a local thinning of the ER membrane which is used to measure the length of the signal peptide (SP) h-region of protein substrates. This ensures the selectivity of the complex towards h-regions shorter than 18-20 amino acids.

It is found in the endoplasmic reticulum membrane. Functionally, essential component of the signal peptidase complex (SPC) which catalyzes the cleavage of N-terminal signal sequences from nascent proteins as they are translocated into the lumen of the endoplasmic reticulum. Essential for the SPC catalytic activity, possibly by stabilizing and positioning the active center of the complex close to the lumenal surface. This Caenorhabditis elegans protein is Signal peptidase complex subunit 3.